Reading from the N-terminus, the 277-residue chain is Small ribosomal subunit protein uS2 (277 aa).

Residues 254–277 (LAGAGSSALNDSGADLSEANPTEA) form a disordered region.

The protein belongs to the universal ribosomal protein uS2 family.

The polypeptide is Small ribosomal subunit protein uS2 (rpsB) (Mycobacterium leprae (strain TN)).